Reading from the N-terminus, the 552-residue chain is Putative phosphate permease MT2339 (552 aa).

13 helical membrane-spanning segments follow: residues 38–58 (WHLS…WWAF), 69–89 (ILVL…GNDV), 107–127 (ALLV…GDVT), 146–166 (DFMN…LFAN), 178–198 (IIGG…QGGA), 213–233 (VSWV…YGVI), 326–346 (VPLV…FKGF), 360–380 (FIIA…AKTL), 389–409 (TFLM…FSHG), 437–457 (AVPA…LWFI), 472–492 (MHPA…MGAT), 493–513 (VLGL…GVGI), and 526–546 (IVLA…VGLV).

This sequence belongs to the inorganic phosphate transporter (PiT) (TC 2.A.20) family.

The protein resides in the cell membrane. Its function is as follows. Potential transporter for phosphate. The polypeptide is Putative phosphate permease MT2339 (Mycobacterium tuberculosis (strain CDC 1551 / Oshkosh)).